The following is a 187-amino-acid chain: Transcriptional repressor NrdR (187 aa).

The interval 1–21 is disordered; the sequence is MQCPYCQHTNSRVLESRSSEG. A zinc finger spans residues 3-34; it reads CPYCQHTNSRVLESRSSEGGQSIRRRRECLNC. Positions 49–139 constitute an ATP-cone domain; that stretch reads ITVIKHDGKK…VYGRFKGIKD (91 aa). Polar residues-rich tracts occupy residues 152–162 and 170–187; these read ISSPMSQWSKS and SQTSPCLSLTHNGSENSR. Residues 152 to 187 are disordered; it reads ISSPMSQWSKSSTRDRDQSQTSPCLSLTHNGSENSR.

It belongs to the NrdR family. The cofactor is Zn(2+).

Functionally, negatively regulates transcription of bacterial ribonucleotide reductase nrd genes and operons by binding to NrdR-boxes. The polypeptide is Transcriptional repressor NrdR (Crocosphaera subtropica (strain ATCC 51142 / BH68) (Cyanothece sp. (strain ATCC 51142))).